Consider the following 496-residue polypeptide: Probable cytosol aminopeptidase (496 aa).

Mn(2+) is bound by residues Lys264 and Asp269. Residue Lys276 is part of the active site. The Mn(2+) site is built by Asp287, Asp346, and Glu348. The active site involves Arg350.

The protein belongs to the peptidase M17 family. Requires Mn(2+) as cofactor.

It is found in the cytoplasm. It carries out the reaction Release of an N-terminal amino acid, Xaa-|-Yaa-, in which Xaa is preferably Leu, but may be other amino acids including Pro although not Arg or Lys, and Yaa may be Pro. Amino acid amides and methyl esters are also readily hydrolyzed, but rates on arylamides are exceedingly low.. The catalysed reaction is Release of an N-terminal amino acid, preferentially leucine, but not glutamic or aspartic acids.. In terms of biological role, presumably involved in the processing and regular turnover of intracellular proteins. Catalyzes the removal of unsubstituted N-terminal amino acids from various peptides. The protein is Probable cytosol aminopeptidase of Geobacter sulfurreducens (strain ATCC 51573 / DSM 12127 / PCA).